The primary structure comprises 291 residues: Phosphatidylglycerol--prolipoprotein diacylglyceryl transferase (291 aa).

7 helical membrane-spanning segments follow: residues 21–41, 60–80, 96–116, 130–150, 198–218, 225–245, and 260–280; these read VALH…MWLA, LLYA…VLFY, WDGG…MIIF, FIAP…FING, SQLY…NLFI, GAVS…VEFF, and ISMG…MMVW. Arg-143 serves as a coordination point for a 1,2-diacyl-sn-glycero-3-phospho-(1'-sn-glycerol).

Belongs to the Lgt family.

The protein localises to the cell inner membrane. It carries out the reaction L-cysteinyl-[prolipoprotein] + a 1,2-diacyl-sn-glycero-3-phospho-(1'-sn-glycerol) = an S-1,2-diacyl-sn-glyceryl-L-cysteinyl-[prolipoprotein] + sn-glycerol 1-phosphate + H(+). Its pathway is protein modification; lipoprotein biosynthesis (diacylglyceryl transfer). Catalyzes the transfer of the diacylglyceryl group from phosphatidylglycerol to the sulfhydryl group of the N-terminal cysteine of a prolipoprotein, the first step in the formation of mature lipoproteins. This Salmonella agona (strain SL483) protein is Phosphatidylglycerol--prolipoprotein diacylglyceryl transferase.